Reading from the N-terminus, the 244-residue chain is Probable transcriptional regulatory protein Aasi_0624 (244 aa).

This sequence belongs to the TACO1 family.

The protein resides in the cytoplasm. The chain is Probable transcriptional regulatory protein Aasi_0624 from Amoebophilus asiaticus (strain 5a2).